Here is a 161-residue protein sequence, read N- to C-terminus: Phosphopantetheine adenylyltransferase (161 aa).

Thr10 contributes to the substrate binding site. ATP-binding positions include 10–11 (TF) and His18. Residues Lys42, Leu75, and Arg89 each coordinate substrate. ATP contacts are provided by residues 90 to 92 (GLR), Glu100, and 125 to 131 (YSFLSSS).

This sequence belongs to the bacterial CoaD family. As to quaternary structure, homohexamer. Requires Mg(2+) as cofactor.

It localises to the cytoplasm. It carries out the reaction (R)-4'-phosphopantetheine + ATP + H(+) = 3'-dephospho-CoA + diphosphate. The protein operates within cofactor biosynthesis; coenzyme A biosynthesis; CoA from (R)-pantothenate: step 4/5. Its function is as follows. Reversibly transfers an adenylyl group from ATP to 4'-phosphopantetheine, yielding dephospho-CoA (dPCoA) and pyrophosphate. The protein is Phosphopantetheine adenylyltransferase of Thermodesulfovibrio yellowstonii (strain ATCC 51303 / DSM 11347 / YP87).